The primary structure comprises 128 residues: MSKPFYVKFEVPPELAEKVYEAVKKARETGGKIKKGTNETTKAVERGIAKLVIIAEDVDPPEIVAHLPLLCDEKKIPYVYVPSKKRLGEAAGIEVAAASAAIIDPGGAKDLVEEIIKQVQELRAKAGA.

It belongs to the eukaryotic ribosomal protein eL8 family. As to quaternary structure, part of the 50S ribosomal subunit. Probably part of the RNase P complex.

The protein resides in the cytoplasm. In terms of biological role, multifunctional RNA-binding protein that recognizes the K-turn motif in ribosomal RNA, the RNA component of RNase P, box H/ACA, box C/D and box C'/D' sRNAs. The polypeptide is Large ribosomal subunit protein eL8 (Staphylothermus marinus (strain ATCC 43588 / DSM 3639 / JCM 9404 / F1)).